The chain runs to 884 residues: MEVQLGLGRVYPRPPSKTYRGAFQNLFQSVREVIQNPGPRHPEAASAAPPGARLQQQQETSPPQQQQQQQGEDGSPQAQSRGPTGYLALDEEQQPSQQQSALECHPESGCVPEPGAAAAASKGLQQQPPAPSDEDDSAVPSTLSLLGPTFPGLSSCSADLKDILSEAGTMQLLQQQQQEAVSEGSSSGRAREAAGAPTSSKDSYLGGTSTISDSAKELCKAVSVSMGLGVETLEHLSPGEQLRGDCMYAPLLGGPPAVRPTPCAPLAECKGSLLDDSADKGTEEPAEYTPFKGSYTQGLEGESLGCSGSSEAGSSGTLELPSTLSLYKSGALEEAASYQSRDYYNFPLALAGPPPPPLPPHPHARIKLENPLDYGSSWAAAAAQCRFGDLASLHGGGATGPGSGSPSAAAASSWHTLFTAEEGQLYGPCGGGGGGTSEAGAVTPYGYSRPPQGLAGQEGDFPAPDVWYPSGVVSRVPYPSPSCVKSEMGPWMESYSGPYGDVRLETARDHVLPIDYYFPPQKTCLICGDEASGCHYGALTCGSCKVFFKRAAEGKQKYLCASRNDCTIDKFRRKNCPSCRLRKCYEAGMTLGARKLKKLGNLKLQEEGEASSATSPTEESSQKLTVSHIEGYECQPIFLNVLEAIEPGVVCAGHDNNQPDSFAALLSSLNELGERQLVHVVKWAKALPGFRNLHVDDQMAVIQYSWMGLMVFAMGWRSFTNVNSRMLYFAPDLVFNEYRMHKSRMYSQCVRMRHLSQEFGWLQITPQEFLCMKALLLFSIIPVDGLKNQKFFDELRMNYIKELDRIIACKRKNPTSCSRRFYQLTKLLDSVQPIARELHQFTFDLLIKSHMVSVDFPEMMAEIISVQVPKILSGKVKPIYFHTQ.

The segment at 1-522 (MEVQLGLGRV…PIDYYFPPQK (522 aa)) is modulating. The interval 1–551 (MEVQLGLGRV…GSCKVFFKRA (551 aa)) is interaction with ZNF318. 2 disordered regions span residues 33 to 145 (VIQN…TLSL) and 174 to 207 (QQQQ…YLGG). Low complexity-rich tracts occupy residues 55–79 (QQQQ…PQAQ) and 174–196 (QQQQ…AAGA). Ser-61 carries the post-translational modification Phosphoserine; by CDK9. At Ser-75 the chain carries Phosphoserine. The span at 197-207 (PTSSKDSYLGG) shows a compositional bias: polar residues. Tyr-204 carries the phosphotyrosine; by CSK modification. Ser-237 bears the Phosphoserine mark. The residue at position 248 (Tyr-248) is a Phosphotyrosine; by CSK and TNK2. Residues 275-294 (DDSADKGTEEPAEYTPFKGS) form a disordered region. Phosphotyrosine; by CSK is present on residues Tyr-288, Tyr-327, Tyr-338, and Tyr-343. Tyr-344 carries the phosphotyrosine; by CSK and TNK2 modification. A Glycyl lysine isopeptide (Lys-Gly) (interchain with G-Cter in SUMO) cross-link involves residue Lys-367. Residue Tyr-374 is modified to Phosphotyrosine; by CSK. Residue Lys-485 forms a Glycyl lysine isopeptide (Lys-Gly) (interchain with G-Cter in SUMO) linkage. Residues Tyr-499 and Tyr-516 each carry the phosphotyrosine; by CSK modification. The interaction with LPXN stretch occupies residues 516–883 (YYFPPQKTCL…GKVKPIYFHT (368 aa)). The nuclear receptor DNA-binding region spans 523–596 (TCLICGDEAS…AGMTLGARKL (74 aa)). 2 NR C4-type zinc fingers span residues 524-544 (CLIC…CGSC) and 560-584 (CASR…LRKC). An interaction with HIPK3 region spans residues 536–626 (YGALTCGSCK…TEESSQKLTV (91 aa)). The tract at residues 556–883 (QKYLCASRND…GKVKPIYFHT (328 aa)) is interaction with CCAR1. Positions 589 to 883 (MTLGARKLKK…GKVKPIYFHT (295 aa)) are interaction with KAT7. A Phosphoserine; by STK4/MST1 modification is found at Ser-615. An NR LBD domain is found at 633–864 (ECQPIFLNVL…DFPEMMAEII (232 aa)). Residues Asn-670 and Arg-717 each coordinate 17beta-hydroxy-5alpha-androstan-3-one. Residues Lys-810 and Lys-812 each participate in a glycyl lysine isopeptide (Lys-Gly) (interchain with G-Cter in ubiquitin) cross-link. A 17beta-hydroxy-5alpha-androstan-3-one-binding site is contributed by Thr-842. The residue at position 880 (Tyr-880) is a Phosphotyrosine; by CSK.

The protein belongs to the nuclear hormone receptor family. NR3 subfamily. As to quaternary structure, binds DNA as a homodimer. Part of a ternary complex containing AR, EFCAB6/DJBP and PARK7. Interacts with HIPK3 and NR0B2 in the presence of androgen. The ligand binding domain interacts with KAT7/HBO1 in the presence of dihydrotestosterone. Interacts with EFCAB6/DJBP, PQBP1, RANBP9, RBAK, SPDEF, SRA1, TGFB1I1 and RREB1. Interacts with ZMIZ1/ZIMP10 and ZMIZ2/ZMIP7 which both enhance its transactivation activity. Interacts with SLC30A9 and RAD54L2/ARIP4. Interacts with MACROD1 (via macro domain). Interacts via the ligand-binding domain with LXXLL and FXXLF motifs from NCOA1, NCOA2, NCOA3 and MAGEA11. Interacts (via nuclear receptor DNA binding domain and nuclear receptor ligand binding domain) with NCOA4. The AR N-terminal poly-Gln region binds Ran resulting in enhancement of AR-mediated transactivation. Ran-binding decreases as the poly-Gln length increases. Interacts with HIP1 (via coiled coil domain). Interacts (via ligand-binding domain) with TRIM68. Interacts with TNK2. Interacts with USP26. Interacts with RNF6. Interacts (regulated by RNF6 probably through polyubiquitination) with RNF14; regulates AR transcriptional activity. Interacts with PRMT2 and TRIM24. Interacts with RACK1. Interacts with RANBP10; this interaction enhances dihydrotestosterone-induced AR transcriptional activity. Interacts with PRPF6 in a hormone-independent way; this interaction enhances dihydrotestosterone-induced AR transcriptional activity. Interacts with STK4/MST1. Interacts with ZIPK/DAPK3. Interacts with LPXN. Interacts with MAK. Part of a complex containing AR, MAK and NCOA3. Interacts with CRY1. Interacts with CCAR1 and GATA2. Interacts with ZNF318. Interacts with BUD31. Interacts with ARID4A. Interacts with ARID4B. Interacts (via NR LBD domain) with ZBTB7A; the interaction is direct and androgen-dependent. Interacts with NCOR1. Interacts with NCOR2. Interacts with CRY2 in a ligand-dependent manner. Post-translationally, phosphorylated in prostate cancer cells in response to several growth factors including EGF. Phosphorylation is induced by c-Src kinase (CSK). Tyr-499 is one of the major phosphorylation sites and an increase in phosphorylation and Src kinase activity is associated with prostate cancer progression. Phosphorylation by TNK2 enhances the DNA-binding and transcriptional activity. Phosphorylation at Ser-61 by CDK9 regulates AR promoter selectivity and cell growth. Sumoylated on Lys-367 (major) and Lys-485. Ubiquitinated. Deubiquitinated by USP26. 'Lys-6' and 'Lys-27'-linked polyubiquitination by RNF6 modulates AR transcriptional activity and specificity. In terms of processing, palmitoylated by ZDHHC7 and ZDHHC21. Palmitoylation is required for plasma membrane targeting and for rapid intracellular signaling via ERK and AKT kinases and cAMP generation.

Its subcellular location is the nucleus. It localises to the cytoplasm. In terms of biological role, steroid hormone receptors are ligand-activated transcription factors that regulate eukaryotic gene expression and affect cellular proliferation and differentiation in target tissues. Transcription factor activity is modulated by bound coactivator and corepressor proteins like ZBTB7A that recruits NCOR1 and NCOR2 to the androgen response elements/ARE on target genes, negatively regulating androgen receptor signaling and androgen-induced cell proliferation. Transcription activation is also down-regulated by NR0B2. Activated, but not phosphorylated, by HIPK3 and ZIPK/DAPK3. This chain is Androgen receptor (AR), found in Eulemur fulvus collaris (Collared brown lemur).